The primary structure comprises 463 residues: Cysteine--tRNA ligase (463 aa).

Residue cysteine 28 coordinates Zn(2+). A 'HIGH' region motif is present at residues isoleucine 30–histidine 40. Zn(2+)-binding residues include cysteine 209, histidine 234, and glutamate 238. A 'KMSKS' region motif is present at residues lysine 266–serine 270. Lysine 269 provides a ligand contact to ATP.

It belongs to the class-I aminoacyl-tRNA synthetase family. In terms of assembly, monomer. The cofactor is Zn(2+).

It localises to the cytoplasm. It catalyses the reaction tRNA(Cys) + L-cysteine + ATP = L-cysteinyl-tRNA(Cys) + AMP + diphosphate. The polypeptide is Cysteine--tRNA ligase (Proteus mirabilis (strain HI4320)).